The following is a 129-amino-acid chain: Small ribosomal subunit protein uS9 (129 aa).

Residues 104–113 show a composition bias toward basic and acidic residues; it reads TRDSRVVERK. A disordered region spans residues 104–129; sequence TRDSRVVERKKPGKRKARRSRQFSKR. Over residues 114 to 129 the composition is skewed to basic residues; that stretch reads KPGKRKARRSRQFSKR.

This sequence belongs to the universal ribosomal protein uS9 family.

The sequence is that of Small ribosomal subunit protein uS9 from Sulfurimonas denitrificans (strain ATCC 33889 / DSM 1251) (Thiomicrospira denitrificans (strain ATCC 33889 / DSM 1251)).